We begin with the raw amino-acid sequence, 392 residues long: N-acetylneuraminate epimerase (392 aa).

The signal sequence occupies residues 1-35 (MTQIYHQYKKKLSTKVILLSALTLCITFSLPYANA). Kelch repeat units lie at residues 56 to 100 (HLYV…VALS), 102 to 155 (KLYV…TTLN), 157 to 192 (TQAL…AVVN), 193 to 238 (AYFD…TAKK), 241 to 290 (LILI…LAGA), 312 to 361 (QQFN…QDKD), and 363 to 392 (VILL…LHLE). Residue Glu-247 is the Proton acceptor of the active site.

Belongs to the NanM family. As to quaternary structure, homodimer.

The protein resides in the periplasm. It catalyses the reaction N-acetyl-alpha-neuraminate = N-acetyl-beta-neuraminate. Converts alpha-N-acetylneuranimic acid (Neu5Ac) to the beta-anomer, accelerating the equilibrium between the alpha- and beta-anomers. Probably facilitates sialidase-negative bacteria to compete successfully for limited amounts of extracellular Neu5Ac, which is likely taken up in the beta-anomer. In addition, the rapid removal of sialic acid from solution might be advantageous to the bacterium to damp down host responses. This is N-acetylneuraminate epimerase from Yersinia enterocolitica serotype O:8 / biotype 1B (strain NCTC 13174 / 8081).